We begin with the raw amino-acid sequence, 156 residues long: Small ribosomal subunit protein uS7 (156 aa).

The protein belongs to the universal ribosomal protein uS7 family. In terms of assembly, part of the 30S ribosomal subunit. Contacts proteins S9 and S11.

Functionally, one of the primary rRNA binding proteins, it binds directly to 16S rRNA where it nucleates assembly of the head domain of the 30S subunit. Is located at the subunit interface close to the decoding center, probably blocks exit of the E-site tRNA. The polypeptide is Small ribosomal subunit protein uS7 (Parafrankia sp. (strain EAN1pec)).